The sequence spans 368 residues: Probable deoxyhypusine synthase (368 aa).

NAD(+)-binding positions include 100–104, 126–128, Glu-132, and Asp-233; these read SNLVS and TAG. Spermidine is bound at residue 131–132; sequence EE. Residue Asp-238 coordinates spermidine. Gly-278 is an NAD(+) binding site. A spermidine-binding site is contributed by His-283. 303–304 provides a ligand contact to NAD(+); the sequence is TA. Residues 309 to 311 and 318 to 324 each bind spermidine; these read GSD and EAISWGK. The active-site Nucleophile is the Lys-324. 337 to 338 serves as a coordination point for NAD(+); the sequence is EA.

This sequence belongs to the deoxyhypusine synthase family. The cofactor is NAD(+).

The catalysed reaction is [eIF5A protein]-L-lysine + spermidine = [eIF5A protein]-deoxyhypusine + propane-1,3-diamine. The protein operates within protein modification; eIF5A hypusination. Its function is as follows. Catalyzes the NAD-dependent oxidative cleavage of spermidine and the subsequent transfer of the butylamine moiety of spermidine to the epsilon-amino group of a specific lysine residue of the eIF-5A precursor protein to form the intermediate deoxyhypusine residue. The chain is Probable deoxyhypusine synthase from Drosophila melanogaster (Fruit fly).